A 481-amino-acid chain; its full sequence is UDP-N-acetylmuramate--L-alanine ligase (481 aa).

Residue 126-132 (GTHGKTT) participates in ATP binding.

It belongs to the MurCDEF family.

The protein resides in the cytoplasm. The catalysed reaction is UDP-N-acetyl-alpha-D-muramate + L-alanine + ATP = UDP-N-acetyl-alpha-D-muramoyl-L-alanine + ADP + phosphate + H(+). Its pathway is cell wall biogenesis; peptidoglycan biosynthesis. In terms of biological role, cell wall formation. This chain is UDP-N-acetylmuramate--L-alanine ligase, found in Marinobacter nauticus (strain ATCC 700491 / DSM 11845 / VT8) (Marinobacter aquaeolei).